The primary structure comprises 171 residues: Lipoprotein signal peptidase (171 aa).

3 helical membrane-spanning segments follow: residues 8 to 28, 64 to 84, and 99 to 119; these read SFLW…YIVV, WQQY…VYFL, and ALII…GFVV. Residues D120 and D138 contribute to the active site. Residues 133–153 traverse the membrane as a helical segment; it reads VFNIADIAICIGAGLLVLDAF.

This sequence belongs to the peptidase A8 family.

Its subcellular location is the cell inner membrane. It carries out the reaction Release of signal peptides from bacterial membrane prolipoproteins. Hydrolyzes -Xaa-Yaa-Zaa-|-(S,diacylglyceryl)Cys-, in which Xaa is hydrophobic (preferably Leu), and Yaa (Ala or Ser) and Zaa (Gly or Ala) have small, neutral side chains.. Its pathway is protein modification; lipoprotein biosynthesis (signal peptide cleavage). This protein specifically catalyzes the removal of signal peptides from prolipoproteins. The polypeptide is Lipoprotein signal peptidase (Haemophilus influenzae (strain ATCC 51907 / DSM 11121 / KW20 / Rd)).